Here is a 245-residue protein sequence, read N- to C-terminus: uncharacterized protein (245 aa).

2 consecutive transmembrane segments (helical) span residues 29–51 and 61–83; these read LVVL…RIGM and TILF…LMLH.

It is found in the cell membrane. This is an uncharacterized protein from Treponema pallidum (strain Nichols).